Here is a 132-residue protein sequence, read N- to C-terminus: Small ribosomal subunit protein uS8 (132 aa).

The protein belongs to the universal ribosomal protein uS8 family. Part of the 30S ribosomal subunit. Contacts proteins S5 and S12.

Its function is as follows. One of the primary rRNA binding proteins, it binds directly to 16S rRNA central domain where it helps coordinate assembly of the platform of the 30S subunit. In Bifidobacterium adolescentis (strain ATCC 15703 / DSM 20083 / NCTC 11814 / E194a), this protein is Small ribosomal subunit protein uS8.